Consider the following 147-residue polypeptide: MFNMNINSPVRFVKETNRAKSPTRQSPYAAGYDLYSAYYYTIPPGERQLIKTDISMSMPKFCYGRIAPRSGLSLKGIDIGGGVIDEDYRGNIGVILINNGKCTFNVNTGDRIAQLIYQRIYYPELKEVQSLDSTDRGDQGFGSTGLR.

R24 provides a ligand contact to Mg(2+). Residues 68 to 70 (PRS), 82 to 85 (GVID), Y88, G93, I95, and R111 contribute to the dUTP site.

The protein belongs to the dUTPase family. It depends on Mg(2+) as a cofactor.

The catalysed reaction is dUTP + H2O = dUMP + diphosphate + H(+). Its function is as follows. This enzyme is involved in nucleotide metabolism: it produces dUMP, the immediate precursor of thymidine nucleotides and it decreases the intracellular concentration of dUTP so that uracil cannot be incorporated into DNA. The sequence is that of Deoxyuridine 5'-triphosphate nucleotidohydrolase (OPG046) from Camelus.